The sequence spans 673 residues: Exoribonuclease 2 (673 aa).

The 326-residue stretch at 191–516 (RTDLTATPFF…NHRLLKAVIA (326 aa)) folds into the RNB domain. The region spanning 562–645 (DKVFNAEIID…ETRSLIAKPA (84 aa)) is the S1 motif domain. Residues 650 to 673 (PGPAPVAPTSEADATPADEAPKAE) form a disordered region.

It belongs to the RNR ribonuclease family. RNase II subfamily.

Its subcellular location is the cytoplasm. The catalysed reaction is Exonucleolytic cleavage in the 3'- to 5'-direction to yield nucleoside 5'-phosphates.. Involved in mRNA degradation. Hydrolyzes single-stranded polyribonucleotides processively in the 3' to 5' direction. The chain is Exoribonuclease 2 from Aeromonas hydrophila subsp. hydrophila (strain ATCC 7966 / DSM 30187 / BCRC 13018 / CCUG 14551 / JCM 1027 / KCTC 2358 / NCIMB 9240 / NCTC 8049).